The sequence spans 131 residues: Small ribosomal subunit protein uS11 (131 aa).

It belongs to the universal ribosomal protein uS11 family. In terms of assembly, part of the 30S ribosomal subunit. Interacts with proteins S7 and S18. Binds to IF-3.

Located on the platform of the 30S subunit, it bridges several disparate RNA helices of the 16S rRNA. Forms part of the Shine-Dalgarno cleft in the 70S ribosome. The chain is Small ribosomal subunit protein uS11 from Helicobacter acinonychis (strain Sheeba).